We begin with the raw amino-acid sequence, 331 residues long: Protoheme IX farnesyltransferase (331 aa).

The next 8 helical transmembrane spans lie at 63–83, 109–129, 132–152, 160–180, 188–208, 215–235, 241–261, and 294–314; these read LACT…LNCL, SVFI…VSGV, LAAG…TAFL, IVFG…AAAG, WLFS…AILL, VGIP…AISV, VFLS…YGIL, and ILYM…VSIV.

It belongs to the UbiA prenyltransferase family. Protoheme IX farnesyltransferase subfamily.

It localises to the cell inner membrane. The enzyme catalyses heme b + (2E,6E)-farnesyl diphosphate + H2O = Fe(II)-heme o + diphosphate. Its pathway is porphyrin-containing compound metabolism; heme O biosynthesis; heme O from protoheme: step 1/1. Its function is as follows. Converts heme B (protoheme IX) to heme O by substitution of the vinyl group on carbon 2 of heme B porphyrin ring with a hydroxyethyl farnesyl side group. The polypeptide is Protoheme IX farnesyltransferase (Prochlorococcus marinus (strain NATL2A)).